The primary structure comprises 453 residues: Serine/threonine-protein phosphatase 2A regulatory subunit B'' subunit gamma (453 aa).

EF-hand domains follow at residues 273–308 and 341–376; these read PSAL…TMTN and KEPA…IQEL. Positions 286, 288, 290, 292, and 297 each coordinate Ca(2+).

As to quaternary structure, interacts with MCM3AP/GANP, PPP5C, and the phosphatase 2A core enzyme composed of the PPP2CA catalytic subunit and the constant regulatory subunit PPP2R1A. Finds in a complex with ABCB1, TFPI2 and PPP2R3C; leading to the dephosphorylation of ABCB1. In terms of tissue distribution, expressed in all tissues tested including heart, brain, spleen, thymus, lung, liver, kidney and testis.

Its subcellular location is the nucleus. The protein localises to the cytoplasm. Functionally, may regulate MCM3AP phosphorylation through phosphatase recruitment. May act as a negative regulator of ABCB1 expression and function through the dephosphorylation of ABCB1 by TFPI2/PPP2R3C complex. May play a role in the activation-induced cell death of B-cells. The polypeptide is Serine/threonine-protein phosphatase 2A regulatory subunit B'' subunit gamma (Ppp2r3c) (Mus musculus (Mouse)).